Here is a 452-residue protein sequence, read N- to C-terminus: Cell division protein FtsZ (452 aa).

Residues 24–28 (GAGSN), 111–113 (GTG), glutamate 142, arginine 146, and aspartate 190 contribute to the GTP site.

Belongs to the FtsZ family. Homodimer. Polymerizes to form a dynamic ring structure in a strictly GTP-dependent manner. Interacts directly with several other division proteins.

It is found in the cytoplasm. Its function is as follows. Essential cell division protein that forms a contractile ring structure (Z ring) at the future cell division site. The regulation of the ring assembly controls the timing and the location of cell division. One of the functions of the FtsZ ring is to recruit other cell division proteins to the septum to produce a new cell wall between the dividing cells. Binds GTP and shows GTPase activity. In Rickettsia felis (strain ATCC VR-1525 / URRWXCal2) (Rickettsia azadi), this protein is Cell division protein FtsZ.